Consider the following 447-residue polypeptide: Tubulin beta chain (447 aa).

Residues glutamine 11, glutamate 69, serine 138, glycine 142, threonine 143, glycine 144, asparagine 204, and asparagine 226 each coordinate GTP. Position 69 (glutamate 69) interacts with Mg(2+). The interval 424-447 (QYQDASISEGEEDYEEEPQVENEE) is disordered. A compositionally biased stretch (acidic residues) spans 432–447 (EGEEDYEEEPQVENEE).

It belongs to the tubulin family. As to quaternary structure, dimer of alpha and beta chains. A typical microtubule is a hollow water-filled tube with an outer diameter of 25 nm and an inner diameter of 15 nM. Alpha-beta heterodimers associate head-to-tail to form protofilaments running lengthwise along the microtubule wall with the beta-tubulin subunit facing the microtubule plus end conferring a structural polarity. Microtubules usually have 13 protofilaments but different protofilament numbers can be found in some organisms and specialized cells. Mg(2+) serves as cofactor.

The protein resides in the cytoplasm. It localises to the cytoskeleton. Its function is as follows. Tubulin is the major constituent of microtubules, a cylinder consisting of laterally associated linear protofilaments composed of alpha- and beta-tubulin heterodimers. Microtubules grow by the addition of GTP-tubulin dimers to the microtubule end, where a stabilizing cap forms. Below the cap, tubulin dimers are in GDP-bound state, owing to GTPase activity of alpha-tubulin. The sequence is that of Tubulin beta chain from Uncinula necator (Grape powdery mildew).